The primary structure comprises 821 residues: Probable E3 ubiquitin-protein ligase hulA (821 aa).

In terms of domain architecture, C2 spans 1–112 (MGSNLPAQPN…QMGGDEMLTR (112 aa)). Disordered regions lie at residues 140 to 240 (PNQA…WERR) and 255 to 359 (RTTT…YFVD). 4 stretches are compositionally biased toward polar residues: residues 151 to 173 (AQSS…SVSP), 181 to 201 (AASN…PTST), 217 to 228 (QGSRTNLSSFED), and 255 to 272 (RTTT…QTQR). A WW 1 domain is found at 231–264 (GRLPAGWERREDNLGRTYYVDHNTRTTTWTRPSS). The segment covering 281–296 (LERRAHQSRMLPEDRT) has biased composition (basic and acidic residues). The span at 297-306 (GANSPNLQES) shows a compositional bias: polar residues. The span at 311 to 339 (PQQAHTPPAGGSASAVSMMATGATTAGTG) shows a compositional bias: low complexity. WW domains follow at residues 339 to 372 (GELP…DPRR) and 399 to 432 (GPLP…DPRL). Residues 488-821 (SASDLKKRLM…VEETLGFGQE (334 aa)) form the HECT domain. The active-site Glycyl thioester intermediate is the C789.

It belongs to the RSP5/NEDD4 family. As to quaternary structure, interacts with creD.

It is found in the cytoplasm. It carries out the reaction S-ubiquitinyl-[E2 ubiquitin-conjugating enzyme]-L-cysteine + [acceptor protein]-L-lysine = [E2 ubiquitin-conjugating enzyme]-L-cysteine + N(6)-ubiquitinyl-[acceptor protein]-L-lysine.. Its pathway is protein modification; protein ubiquitination. In terms of biological role, E3 ubiquitin-protein ligase which accepts ubiquitin from an E2 ubiquitin-conjugating enzyme in the form of a thioester and then directly transfers the ubiquitin to targeted substrates. Probably involved in the regulatory network controlling carbon source utilization. The polypeptide is Probable E3 ubiquitin-protein ligase hulA (hulA) (Aspergillus niger (strain ATCC MYA-4892 / CBS 513.88 / FGSC A1513)).